We begin with the raw amino-acid sequence, 419 residues long: ATP phosphoribosyltransferase regulatory subunit (419 aa).

It belongs to the class-II aminoacyl-tRNA synthetase family. HisZ subfamily. As to quaternary structure, heteromultimer composed of HisG and HisZ subunits.

The protein localises to the cytoplasm. Its pathway is amino-acid biosynthesis; L-histidine biosynthesis; L-histidine from 5-phospho-alpha-D-ribose 1-diphosphate: step 1/9. Functionally, required for the first step of histidine biosynthesis. May allow the feedback regulation of ATP phosphoribosyltransferase activity by histidine. This chain is ATP phosphoribosyltransferase regulatory subunit, found in Ruminiclostridium cellulolyticum (strain ATCC 35319 / DSM 5812 / JCM 6584 / H10) (Clostridium cellulolyticum).